A 602-amino-acid polypeptide reads, in one-letter code: Glutathione-regulated potassium-efflux system protein KefB (602 aa).

13 helical membrane passes run 4 to 24 (TGLL…VPIA), 29 to 49 (IGAV…GLGF), 55 to 75 (EILH…GLEL), 87 to 107 (IFGV…ALLY), 115 to 135 (AAVI…LQLM), 152 to 172 (VLLF…ILAG), 181 to 201 (VKIG…RYLL), 207 to 227 (YIVA…VVLG), 230 to 250 (LFMD…GILL), 261 to 281 (IAIE…VGMA), 296 to 318 (LGVL…VFGL), 326 to 346 (FAGV…AAFS), and 356 to 376 (ALLL…MQVI). The RCK N-terminal domain occupies 400–519 (DPQVIIVGFG…NGVKDFTRET (120 aa)).

It belongs to the monovalent cation:proton antiporter 2 (CPA2) transporter (TC 2.A.37) family. KefB subfamily. In terms of assembly, interacts with the regulatory subunit KefG.

Its subcellular location is the cell inner membrane. Functionally, pore-forming subunit of a potassium efflux system that confers protection against electrophiles. Catalyzes K(+)/H(+) antiport. This chain is Glutathione-regulated potassium-efflux system protein KefB, found in Yersinia pestis bv. Antiqua (strain Antiqua).